The sequence spans 24 residues: Unknown protein 6 (24 aa).

In Lonomia obliqua (Moth), this protein is Unknown protein 6.